The following is a 621-amino-acid chain: uncharacterized protein (621 aa).

It belongs to the chlamydial CPn_0512/CT_425/TC_0708 family.

This is an uncharacterized protein from Chlamydia muridarum (strain MoPn / Nigg).